The primary structure comprises 252 residues: Ubiquinone/menaquinone biosynthesis C-methyltransferase UbiE (252 aa).

S-adenosyl-L-methionine contacts are provided by residues Thr71, Asp100, 124–125, and Ser141; that span reads DA.

The protein belongs to the class I-like SAM-binding methyltransferase superfamily. MenG/UbiE family.

The catalysed reaction is a 2-demethylmenaquinol + S-adenosyl-L-methionine = a menaquinol + S-adenosyl-L-homocysteine + H(+). It carries out the reaction a 2-methoxy-6-(all-trans-polyprenyl)benzene-1,4-diol + S-adenosyl-L-methionine = a 5-methoxy-2-methyl-3-(all-trans-polyprenyl)benzene-1,4-diol + S-adenosyl-L-homocysteine + H(+). The protein operates within quinol/quinone metabolism; menaquinone biosynthesis; menaquinol from 1,4-dihydroxy-2-naphthoate: step 2/2. Its pathway is cofactor biosynthesis; ubiquinone biosynthesis. Its function is as follows. Methyltransferase required for the conversion of demethylmenaquinol (DMKH2) to menaquinol (MKH2) and the conversion of 2-polyprenyl-6-methoxy-1,4-benzoquinol (DDMQH2) to 2-polyprenyl-3-methyl-6-methoxy-1,4-benzoquinol (DMQH2). This chain is Ubiquinone/menaquinone biosynthesis C-methyltransferase UbiE, found in Caulobacter vibrioides (strain ATCC 19089 / CIP 103742 / CB 15) (Caulobacter crescentus).